A 572-amino-acid polypeptide reads, in one-letter code: Arginine--tRNA ligase (572 aa).

The 'HIGH' region signature appears at 122-132; it reads PNLAKEMHVGH.

The protein belongs to the class-I aminoacyl-tRNA synthetase family. In terms of assembly, monomer.

It localises to the cytoplasm. The enzyme catalyses tRNA(Arg) + L-arginine + ATP = L-arginyl-tRNA(Arg) + AMP + diphosphate. This Neisseria gonorrhoeae (strain NCCP11945) protein is Arginine--tRNA ligase.